We begin with the raw amino-acid sequence, 425 residues long: Monoacylglycerol lipase ABHD2 (425 aa).

The Cytoplasmic portion of the chain corresponds to 1–9 (MNAMMETSE). A helical; Signal-anchor for type II membrane protein transmembrane segment spans residues 10 to 30 (LPAVFDGVKLAAVAAVLYVIV). At 31 to 425 (RCLNLKSPTA…DTELVEADLE (395 aa)) the chain is on the extracellular side. Residues 128 to 382 (MVICPGIANH…HGGHLGFFEG (255 aa)) enclose the AB hydrolase-1 domain. Asn136 carries N-linked (GlcNAc...) asparagine glycosylation. The active-site Nucleophile is the Ser207. Active-site charge relay system residues include Asp345 and His376. N-linked (GlcNAc...) asparagine glycosylation is present at Asn410.

It belongs to the AB hydrolase superfamily. AB hydrolase 4 family.

Its subcellular location is the cell membrane. It catalyses the reaction Hydrolyzes glycerol monoesters of long-chain fatty acids.. The catalysed reaction is an acetyl ester + H2O = an aliphatic alcohol + acetate + H(+). The enzyme catalyses a triacylglycerol + H2O = a diacylglycerol + a fatty acid + H(+). It carries out the reaction 2-(5Z,8Z,11Z,14Z-eicosatetraenoyl)-glycerol + H2O = glycerol + (5Z,8Z,11Z,14Z)-eicosatetraenoate + H(+). It catalyses the reaction a butanoate ester + H2O = an aliphatic alcohol + butanoate + H(+). The catalysed reaction is hexadecanoate ester + H2O = an aliphatic alcohol + hexadecanoate + H(+). Its activity is regulated as follows. Acylglycerol lipase activity is activated upon binding to progesterone. Its function is as follows. Progesterone-dependent acylglycerol lipase that catalyzes hydrolysis of endocannabinoid arachidonoylglycerol (AG) from cell membrane. Acts as a progesterone receptor: progesterone-binding activates the acylglycerol lipase activity, mediating degradation of 1-arachidonoylglycerol (1AG) and 2-arachidonoylglycerol (2AG) to glycerol and arachidonic acid (AA). Also displays an ester hydrolase activity against acetyl ester, butanoate ester and hexadecanoate ester. Plays a key role in sperm capacitation in response to progesterone by mediating degradation of 2AG, an inhibitor of the sperm calcium channel CatSper, leading to calcium influx via CatSper and sperm activation. May also play a role in smooth muscle cells migration. This is Monoacylglycerol lipase ABHD2 (ABHD2) from Bos taurus (Bovine).